The chain runs to 519 residues: Bifunctional pantoate ligase/cytidylate kinase (519 aa).

Positions 1–282 (MNLTILRTKT…CGNTRLIDHG (282 aa)) are pantoate--beta-alanine ligase. Residue 30-37 (MGGLHQGH) participates in ATP binding. H37 acts as the Proton donor in catalysis. Position 66 (Q66) interacts with (R)-pantoate. Q66 provides a ligand contact to beta-alanine. An ATP-binding site is contributed by 155-158 (GEKD). Q161 is a (R)-pantoate binding site. Position 192–195 (192–195 (CSSR)) interacts with ATP. The tract at residues 283-519 (FLMKRNPIVA…PQEVWPTNAT (237 aa)) is cytidylate kinase.

The protein in the N-terminal section; belongs to the pantothenate synthetase family. It in the C-terminal section; belongs to the cytidylate kinase family. Type 1 subfamily.

The protein resides in the cytoplasm. The catalysed reaction is (R)-pantoate + beta-alanine + ATP = (R)-pantothenate + AMP + diphosphate + H(+). It carries out the reaction CMP + ATP = CDP + ADP. The enzyme catalyses dCMP + ATP = dCDP + ADP. It participates in cofactor biosynthesis; (R)-pantothenate biosynthesis; (R)-pantothenate from (R)-pantoate and beta-alanine: step 1/1. Its function is as follows. Catalyzes the condensation of pantoate with beta-alanine in an ATP-dependent reaction via a pantoyl-adenylate intermediate. In terms of biological role, catalyzes the transfer of a phosphate group from ATP to either CMP or dCMP to form CDP or dCDP and ADP, respectively. The chain is Bifunctional pantoate ligase/cytidylate kinase from Prochlorococcus marinus (strain SARG / CCMP1375 / SS120).